The chain runs to 521 residues: Zinc finger protein GLIS2 (521 aa).

The segment at 35–174 is interaction with CTNND1; sequence ALHRELGLVD…AKQLVCRWAK (140 aa). 2 disordered regions span residues 41 to 63 and 84 to 110; these read GLVDDSPAPGSPGSPPPGFLLNP and SPPSGLDSPNGSSSLSPECQGNGDLPP. The span at 49–58 shows a compositional bias: pro residues; that stretch reads PGSPGSPPPG. The transcription activation stretch occupies residues 71 to 137; the sequence is GRFSAAPLVD…SSFQFFLPLG (67 aa). The segment covering 84 to 100 has biased composition (low complexity); that stretch reads SPPSGLDSPNGSSSLSP. The tract at residues 148–171 is transcription repression; sequence SFLPPPKDKCLSPELPLAKQLVCR. Residues 168–193 form a C2H2-type 1 zinc finger; it reads LVCRWAKCNQLFELLQDLVDHVNDHH. The segment at 202–229 adopts a C2H2-type 2; atypical zinc-finger fold; that stretch reads YCCHWEGCARHGRGFNARYKMLIHIRTH. C2H2-type zinc fingers lie at residues 235–257, 263–287, and 293–317; these read HRCPTCNKSFSRLENLKIHNRSH, YVCPYEGCNKRYSNSSDRFKHTRTH, and YYCKMPGCHKRYTDPSSLRKHIKAH. Positions 436 to 501 are disordered; that stretch reads AGSKAEGEKG…NSAASSPEVL (66 aa). The segment covering 455 to 470 has biased composition (basic and acidic residues); that stretch reads GLEDHKTPLERTERSR. A compositionally biased stretch (polar residues) spans 487–496; sequence DLSTGNSAAS.

This sequence belongs to the GLI C2H2-type zinc-finger protein family. As to quaternary structure, interacts with CTBP1 and HDAC3. Interacts with CTNNB1 and CTNND1. Interacts with SUFU. In terms of processing, C-terminus cleavage is induced by interaction with CTNND1 and enhances by Src tyrosine kinase. In terms of tissue distribution, expressed at high levels in kidney, and at lower levels in heart and lung.

The protein resides in the nucleus speckle. It is found in the cytoplasm. In terms of biological role, can act either as a transcriptional repressor or as a transcriptional activator, depending on the cell context. Acts as a repressor of the Hedgehog signaling pathway. Represses the Hedgehog-dependent expression of Wnt4. Necessary to maintain the differentiated epithelial phenotype in renal cells through the inhibition of SNAI1, which itself induces the epithelial-to-mesenchymal transition. Represses transcriptional activation by CTNNB1 in the Wnt signaling pathway. May act by recruiting the corepressors CTBP1 and HDAC3. May be involved in neuron differentiation. The polypeptide is Zinc finger protein GLIS2 (Glis2) (Mus musculus (Mouse)).